Here is a 248-residue protein sequence, read N- to C-terminus: MARKFFVGGNFKMNGTRKDLKAIVDNLNNAQLDPNAEVVIAPPALYLDFVKQNLQKPNVEVAAQNVFNKPNGAFTGEISATQLLDLGVKWVILGHSERRNELGESDEFIASKTKYALDNGISVIWCCGESKDTRQAGETIKFVENQLAALAKEINDWKNVVIAYEPIWAIGTGLVATKEQAQEVHAAIRSWLKQNVSDKVAEETRILYGGSVNAKNCKDLAKEQDIDGFLVGGASLKPEFVDIINANL.

Residues N10 and K12 each contribute to the substrate site. Catalysis depends on H95, which acts as the Electrophile. E165 serves as the catalytic Proton acceptor.

Belongs to the triosephosphate isomerase family. In terms of assembly, homodimer.

It catalyses the reaction D-glyceraldehyde 3-phosphate = dihydroxyacetone phosphate. It functions in the pathway carbohydrate biosynthesis; gluconeogenesis. Its pathway is carbohydrate degradation; glycolysis; D-glyceraldehyde 3-phosphate from glycerone phosphate: step 1/1. The polypeptide is Triosephosphate isomerase (tpi-1) (Neurospora crassa (strain ATCC 24698 / 74-OR23-1A / CBS 708.71 / DSM 1257 / FGSC 987)).